The following is a 313-amino-acid chain: Ribosomal RNA small subunit methyltransferase H (313 aa).

Residues 35 to 37 (GGH), Asp-55, Phe-81, Asp-103, and Gln-110 each bind S-adenosyl-L-methionine.

It belongs to the methyltransferase superfamily. RsmH family.

It localises to the cytoplasm. The enzyme catalyses cytidine(1402) in 16S rRNA + S-adenosyl-L-methionine = N(4)-methylcytidine(1402) in 16S rRNA + S-adenosyl-L-homocysteine + H(+). Its function is as follows. Specifically methylates the N4 position of cytidine in position 1402 (C1402) of 16S rRNA. The polypeptide is Ribosomal RNA small subunit methyltransferase H (Pseudomonas aeruginosa (strain UCBPP-PA14)).